The following is a 509-amino-acid chain: Diacylglycerol kinase 5 (509 aa).

The 152-residue stretch at 36 to 187 (TPASPVLVFI…IDNWHILMRM (152 aa)) folds into the DAGKc domain. Basic and acidic residues predominate over residues 439–452 (RSVFDPSTPRHQDG). Residues 439 to 509 (RSVFDPSTPR…SNVHGWSHVL (71 aa)) form a disordered region. Positions 453–467 (AEDYDDNEDDSVAEG) are enriched in acidic residues. Positions 468 to 489 (EEFRKFGAADTFKIPDEGEHSN) are enriched in basic and acidic residues. Residues 490-500 (KKGRASRRRNS) are compositionally biased toward basic residues.

This sequence belongs to the eukaryotic diacylglycerol kinase family. As to quaternary structure, monomer.

It catalyses the reaction a 1,2-diacyl-sn-glycerol + ATP = a 1,2-diacyl-sn-glycero-3-phosphate + ADP + H(+). Phosphorylates the second messenger diacylglycerol (DAG) to generate phosphatidic acid (PA), another important signaling molecule. PA is required for plant development and responses to abiotic stress and pathogen attack. May be involved in the accumulation of PA during cold stress. The chain is Diacylglycerol kinase 5 (DGK5) from Arabidopsis thaliana (Mouse-ear cress).